An 833-amino-acid chain; its full sequence is Homeobox-leucine zipper protein ATHB-8 (833 aa).

Residues 12–75 (DNGKYVRYTP…NRRCREKQRK (64 aa)) constitute a DNA-binding region (homeobox). A coiled-coil region spans residues 70–108 (REKQRKEASRLQAVNRKLTAMNKLLMEENDRLQKQVSHL). The START domain occupies 150–378 (RDASPAGLLS…ISQEISQPNV (229 aa)).

Belongs to the HD-ZIP homeobox family. Class III subfamily. Interacts with ESR1 and ESR2. Interacts with ZPR3.

The protein resides in the nucleus. Probable transcription factor involved in the regulation of vascular development. May promote differentiation of precambial and cambial cells. This chain is Homeobox-leucine zipper protein ATHB-8 (ATHB-8), found in Arabidopsis thaliana (Mouse-ear cress).